The following is an 88-amino-acid chain: UPF0367 protein syc2447_c (88 aa).

The protein belongs to the UPF0367 family.

The sequence is that of UPF0367 protein syc2447_c from Synechococcus sp. (strain ATCC 27144 / PCC 6301 / SAUG 1402/1) (Anacystis nidulans).